The primary structure comprises 376 residues: Chaperone protein DnaJ (376 aa).

Residues 5-70 (DYYEVLGVGR…DKKAAYDQFG (66 aa)) form the J domain. The CR-type zinc finger occupies 132–210 (GLTKELRIPT…CHGDGRVEKS (79 aa)). Residues C145, C148, C162, C165, C184, C187, C198, and C201 each coordinate Zn(2+). 4 CXXCXGXG motif repeats span residues 145–152 (CDLCDGSG), 162–169 (CTTCHGQG), 184–191 (CPTCHGRG), and 198–205 (CSKCHGDG).

It belongs to the DnaJ family. In terms of assembly, homodimer. Zn(2+) is required as a cofactor.

Its subcellular location is the cytoplasm. Participates actively in the response to hyperosmotic and heat shock by preventing the aggregation of stress-denatured proteins and by disaggregating proteins, also in an autonomous, DnaK-independent fashion. Unfolded proteins bind initially to DnaJ; upon interaction with the DnaJ-bound protein, DnaK hydrolyzes its bound ATP, resulting in the formation of a stable complex. GrpE releases ADP from DnaK; ATP binding to DnaK triggers the release of the substrate protein, thus completing the reaction cycle. Several rounds of ATP-dependent interactions between DnaJ, DnaK and GrpE are required for fully efficient folding. Also involved, together with DnaK and GrpE, in the DNA replication of plasmids through activation of initiation proteins. This chain is Chaperone protein DnaJ, found in Shewanella sp. (strain W3-18-1).